Consider the following 348-residue polypeptide: 4-hydroxyphenylpyruvate dioxygenase (348 aa).

2 consecutive VOC domains span residues 11–141 and 151–303; these read GFAF…ITSS and AIDH…IFTE. Residues histidine 154, histidine 232, and glutamate 312 each contribute to the Fe cation site.

Belongs to the 4HPPD family. It depends on Fe cation as a cofactor.

The catalysed reaction is 3-(4-hydroxyphenyl)pyruvate + O2 = homogentisate + CO2. Catalyzes the transformation of p-hydroxyphenylpyruvate into HGA. Has hemolytic and brown pigment production activity. The chain is 4-hydroxyphenylpyruvate dioxygenase (lly) from Legionella pneumophila (strain Corby).